A 233-amino-acid polypeptide reads, in one-letter code: MGEPQQVSALPPPPMQYIKEYTDENIQEGLAPKPPPPIKDSYMMFGNQFQCDDLIIRPLESQGIERLHPMQFDHKKELRKLNMSILINFLDLLDILIRSPGSIKREEKLEDLKLLFVHVHHLINEYRPHQARETLRVMMEVQKRQRLETAERFQKHLERVIEMIQNCLASLPDDLPHSEAGMRVKTEPMDADDSNNCTGQNEHQRENSGHRRDQIIEKDAALCVLIDEMNERP.

Lys-185 is covalently cross-linked (Glycyl lysine isopeptide (Lys-Gly) (interchain with G-Cter in SUMO1); alternate). Lys-185 is covalently cross-linked (Glycyl lysine isopeptide (Lys-Gly) (interchain with G-Cter in SUMO2); alternate). Residues 187 to 213 are disordered; it reads EPMDADDSNNCTGQNEHQRENSGHRRD. Ser-194 carries the post-translational modification Phosphoserine. The span at 202–213 shows a compositional bias: basic and acidic residues; the sequence is EHQRENSGHRRD.

This sequence belongs to the Mediator complex subunit 7 family. As to quaternary structure, component of the Mediator complex, which is composed of MED1, MED4, MED6, MED7, MED8, MED9, MED10, MED11, MED12, MED13, MED13L, MED14, MED15, MED16, MED17, MED18, MED19, MED20, MED21, MED22, MED23, MED24, MED25, MED26, MED27, MED29, MED30, MED31, CCNC, CDK8 and CDC2L6/CDK11. The MED12, MED13, CCNC and CDK8 subunits form a distinct module termed the CDK8 module. Mediator containing the CDK8 module is less active than Mediator lacking this module in supporting transcriptional activation. Individual preparations of the Mediator complex lacking one or more distinct subunits have been variously termed ARC, CRSP, DRIP, PC2, SMCC and TRAP. In terms of processing, constitutively sumoylated.

It localises to the nucleus. In terms of biological role, component of the Mediator complex, a coactivator involved in the regulated transcription of nearly all RNA polymerase II-dependent genes. Mediator functions as a bridge to convey information from gene-specific regulatory proteins to the basal RNA polymerase II transcription machinery. Mediator is recruited to promoters by direct interactions with regulatory proteins and serves as a scaffold for the assembly of a functional preinitiation complex with RNA polymerase II and the general transcription factors. This is Mediator of RNA polymerase II transcription subunit 7 (MED7) from Homo sapiens (Human).